The chain runs to 481 residues: uncharacterized protein (481 aa).

The next 10 membrane-spanning stretches (helical) occupy residues leucine 32–valine 52, phenylalanine 82–tyrosine 102, methionine 137–phenylalanine 157, valine 173–isoleucine 193, valine 204–isoleucine 224, tryptophan 258–threonine 278, valine 289–glutamate 309, leucine 348–valine 368, leucine 392–leucine 412, and threonine 418–isoleucine 438.

It belongs to the BCCT transporter (TC 2.A.15) family.

It localises to the cell inner membrane. In terms of biological role, probable transporter whose substrate is unknown. Is not involved in aerobic D-malate transport. This is an uncharacterized protein from Escherichia coli (strain K12).